The chain runs to 59 residues: Small, acid-soluble spore protein H (59 aa).

The protein belongs to the SspH family.

Its subcellular location is the spore core. This chain is Small, acid-soluble spore protein H, found in Alkaliphilus metalliredigens (strain QYMF).